The sequence spans 670 residues: MTNIQTQLDNLRKTLRQYEYEYHVLDNPSVPDSEYDRLFHQLKALELEHPEFLTSDSPTQRVGAKPLSGFSQIRHEIPMLSLDNAFSDTEFNAFVKRIEDRLILLPKPLTFCCEPKLDGLAVSILYVNGVLTQAATRGDGSTGEDITANIRTIRNVPLQLLTDNPPARLEVRGEVFMPHAGFERLNKYALEHNEKTFANPRNAAAGSLRQLDPNITSKRPLVLNAYGIGIAEGVDLPTTHYDRLQWLKSIGIPVNPEIRLCNGADEVLGFYRDIQNKRSSLGYDIDGTVLKINDIALQNELGFISKAPRWAIAYKFPAQEELTLLNDVEFQVGRTGAITPVAKLEPVFVAGVTVSNATLHNGDEIERLNIAIGDTVVIRRAGDVIPQIIGVLHERRPDNAKPIIFPTNCPVCDSQIIRIEGEAVARCTGGLFCAAQRKEALKHFVSRKAMDIDGVGGKLIEQLVDRELIHTPADLFKLDLTTLTRLERMGAKSAENALNSLENAKSTTLARFIFALGIREVGEATALNLANHFKTLDALKDANLEELQQVPDVGEVVANRIFIFWREAHNVAVVEDLIAQGVHWETVEVKEASENLFKDKTVVLTGTLTQMGRNEAKALLQQLGAKVSGSVSSKTDFVIAGDAAGSKLAKAQELNITVLTEEEFLAQITR.

NAD(+) contacts are provided by residues 32–36 (DSEYD), 81–82 (SL), and Glu-114. The active-site N6-AMP-lysine intermediate is the Lys-116. Residues Arg-137, Glu-174, Lys-291, and Lys-315 each contribute to the NAD(+) site. Residues Cys-409, Cys-412, Cys-427, and Cys-433 each contribute to the Zn(2+) site. One can recognise a BRCT domain in the interval 592-670 (ASENLFKDKT…EEEFLAQITR (79 aa)).

It belongs to the NAD-dependent DNA ligase family. LigA subfamily. Mg(2+) is required as a cofactor. It depends on Mn(2+) as a cofactor.

It catalyses the reaction NAD(+) + (deoxyribonucleotide)n-3'-hydroxyl + 5'-phospho-(deoxyribonucleotide)m = (deoxyribonucleotide)n+m + AMP + beta-nicotinamide D-nucleotide.. Functionally, DNA ligase that catalyzes the formation of phosphodiester linkages between 5'-phosphoryl and 3'-hydroxyl groups in double-stranded DNA using NAD as a coenzyme and as the energy source for the reaction. It is essential for DNA replication and repair of damaged DNA. The sequence is that of DNA ligase from Haemophilus influenzae (strain PittGG).